We begin with the raw amino-acid sequence, 245 residues long: MASPSRRLQTKPVITCLKSVLLIYTFIFWITGVILLAVGIWGKVSLENYFSLLNEKATNVPFVLIGTGTVIILLGTFGCFATCRTSAWMLKLYAMFLTLIFLVELVAAIVGFVFRHEIKNSFKSNYENALKEYNSTGDYRSEAVDKIQSTLHCCGVTNYGDWKGTNYYSETGFPKSCCKLEGCYPQRDADKVNEEGCFIKVMTTIESEMGVVAGISFGVACFQLIGIFLAYCLSRAITNNQYEIV.

At 1–19 (MASPSRRLQTKPVITCLKS) the chain is on the cytoplasmic side. Residues 20-40 (VLLIYTFIFWITGVILLAVGI) traverse the membrane as a helical segment. Residues 41–59 (WGKVSLENYFSLLNEKATN) lie on the Extracellular side of the membrane. The chain crosses the membrane as a helical span at residues 60–80 (VPFVLIGTGTVIILLGTFGCF). The Cytoplasmic portion of the chain corresponds to 81 to 93 (ATCRTSAWMLKLY). A helical membrane pass occupies residues 94–114 (AMFLTLIFLVELVAAIVGFVF). Residues 115 to 208 (RHEIKNSFKS…IKVMTTIESE (94 aa)) lie on the Extracellular side of the membrane. N134 carries an N-linked (GlcNAc...) asparagine glycan. Residues 209–229 (MGVVAGISFGVACFQLIGIFL) form a helical membrane-spanning segment. Topologically, residues 230–245 (AYCLSRAITNNQYEIV) are cytoplasmic.

This sequence belongs to the tetraspanin (TM4SF) family.

The protein resides in the membrane. The chain is Tetraspanin-6 (Tspan6) from Mus musculus (Mouse).